An 871-amino-acid polypeptide reads, in one-letter code: Alanine--tRNA ligase (871 aa).

Zn(2+)-binding residues include histidine 559, histidine 563, cysteine 661, and histidine 665.

The protein belongs to the class-II aminoacyl-tRNA synthetase family. It depends on Zn(2+) as a cofactor.

Its subcellular location is the cytoplasm. The catalysed reaction is tRNA(Ala) + L-alanine + ATP = L-alanyl-tRNA(Ala) + AMP + diphosphate. Functionally, catalyzes the attachment of alanine to tRNA(Ala) in a two-step reaction: alanine is first activated by ATP to form Ala-AMP and then transferred to the acceptor end of tRNA(Ala). Also edits incorrectly charged Ser-tRNA(Ala) and Gly-tRNA(Ala) via its editing domain. The polypeptide is Alanine--tRNA ligase (Aquifex pyrophilus).